Consider the following 311-residue polypeptide: Probable manganese-dependent inorganic pyrophosphatase (311 aa).

Residues H9, D13, D15, D77, H99, and D151 each contribute to the Mn(2+) site.

This sequence belongs to the PPase class C family. In terms of assembly, homodimer. Mn(2+) is required as a cofactor.

The protein resides in the cytoplasm. It catalyses the reaction diphosphate + H2O = 2 phosphate + H(+). The chain is Probable manganese-dependent inorganic pyrophosphatase (ppaC) from Streptococcus gordonii (strain Challis / ATCC 35105 / BCRC 15272 / CH1 / DL1 / V288).